An 838-amino-acid chain; its full sequence is Translation initiation factor IF-2 (838 aa).

Positions 1–235 (MSDTDGKKPL…RSLAAMKREQ (235 aa)) are disordered. Over residues 18–27 (SGQVKQSFSH) the composition is skewed to polar residues. Over residues 50–60 (SGSSTTTSSPS) the composition is skewed to low complexity. Positions 88-156 (KLREVDDAKR…AARRAEEAKR (69 aa)) are enriched in basic and acidic residues. The span at 162-177 (PAAAQPDAADSRASAP) shows a compositional bias: low complexity. Residues 187–208 (SRKEREREADRDRTTKKDDSRR) are compositionally biased toward basic and acidic residues. The tr-type G domain maps to 335-509 (PRPPIITIMG…ELLDLRANPK (175 aa)). Positions 344–351 (GHVDHGKT) are G1. 344–351 (GHVDHGKT) is a GTP binding site. The interval 369–373 (GITQH) is G2. A G3 region spans residues 391–394 (DTPG). GTP contacts are provided by residues 391 to 395 (DTPGH) and 445 to 448 (NKID). A G4 region spans residues 445 to 448 (NKID). Positions 481–483 (SAK) are G5.

The protein belongs to the TRAFAC class translation factor GTPase superfamily. Classic translation factor GTPase family. IF-2 subfamily.

The protein resides in the cytoplasm. Its function is as follows. One of the essential components for the initiation of protein synthesis. Protects formylmethionyl-tRNA from spontaneous hydrolysis and promotes its binding to the 30S ribosomal subunits. Also involved in the hydrolysis of GTP during the formation of the 70S ribosomal complex. The polypeptide is Translation initiation factor IF-2 (Cereibacter sphaeroides (strain ATCC 17025 / ATH 2.4.3) (Rhodobacter sphaeroides)).